Here is a 172-residue protein sequence, read N- to C-terminus: UPF0102 protein Pcryo_2198 (172 aa).

This sequence belongs to the UPF0102 family.

The protein is UPF0102 protein Pcryo_2198 of Psychrobacter cryohalolentis (strain ATCC BAA-1226 / DSM 17306 / VKM B-2378 / K5).